A 209-amino-acid chain; its full sequence is MSKVTVIDHPLIQHKLTLIRDKNTGSKDFRALVREISMLMGYEVTRDLSLEEIEIETPVCTTKAKTLTGRKLGIVPILRAGLGMVDGILELIPAAKVGHVGLYRDPETLEPVEYYVKLPTDVHERELIVLDPMLATGGSANAAIQFIKDRGATNIKLVCLVSCPQGIAAVQEAHPDVDIYVAAIDETLDDHAYIVPGLGDAGDRLFGTK.

5-phospho-alpha-D-ribose 1-diphosphate contacts are provided by residues arginine 79, arginine 104, and 131-139 (DPMLATGGS). Uracil is bound by residues isoleucine 194 and 199–201 (GDA). Aspartate 200 lines the 5-phospho-alpha-D-ribose 1-diphosphate pocket.

This sequence belongs to the UPRTase family. Mg(2+) serves as cofactor.

The enzyme catalyses UMP + diphosphate = 5-phospho-alpha-D-ribose 1-diphosphate + uracil. It participates in pyrimidine metabolism; UMP biosynthesis via salvage pathway; UMP from uracil: step 1/1. Its activity is regulated as follows. Allosterically activated by GTP. In terms of biological role, catalyzes the conversion of uracil and 5-phospho-alpha-D-ribose 1-diphosphate (PRPP) to UMP and diphosphate. This chain is Uracil phosphoribosyltransferase, found in Alkaliphilus oremlandii (strain OhILAs) (Clostridium oremlandii (strain OhILAs)).